Reading from the N-terminus, the 559-residue chain is Nicotinate phosphoribosyltransferase 1 (559 aa).

Nicotinate is bound by residues tyrosine 33 and threonine 221. Histidine 224 is subject to Phosphohistidine. Arginine 331 is a nicotinate binding site. Residue threonine 393 participates in 5-phospho-alpha-D-ribose 1-diphosphate binding.

Belongs to the NAPRTase family. Requires Mg(2+) as cofactor. Mn(2+) is required as a cofactor. In terms of processing, transiently phosphorylated on a His residue during the reaction cycle. Phosphorylation strongly increases the affinity for substrates and increases the rate of nicotinate D-ribonucleotide production. Dephosphorylation regenerates the low-affinity form of the enzyme, leading to product release.

The catalysed reaction is nicotinate + 5-phospho-alpha-D-ribose 1-diphosphate + ATP + H2O = nicotinate beta-D-ribonucleotide + ADP + phosphate + diphosphate. Its pathway is cofactor biosynthesis; NAD(+) biosynthesis; nicotinate D-ribonucleotide from nicotinate: step 1/1. In terms of biological role, catalyzes the first step in the biosynthesis of NAD from nicotinic acid, the ATP-dependent synthesis of beta-nicotinate D-ribonucleotide from nicotinate and 5-phospho-D-ribose 1-phosphate. Helps prevent cellular oxidative stress via its role in NAD biosynthesis. This is Nicotinate phosphoribosyltransferase 1 from Arabidopsis thaliana (Mouse-ear cress).